The following is a 175-amino-acid chain: Isopentenyl-diphosphate Delta-isomerase (175 aa).

Mn(2+)-binding residues include histidine 23 and histidine 30. Residues 28-162 form the Nudix hydrolase domain; that stretch reads TLHLAFCVFV…PLRYTPWFRR (135 aa). Cysteine 65 is a catalytic residue. Histidine 67 lines the Mn(2+) pocket. Residue glutamate 85 participates in Mg(2+) binding. Positions 111 and 113 each coordinate Mn(2+). The active site involves glutamate 113.

This sequence belongs to the IPP isomerase type 1 family. Requires Mg(2+) as cofactor. The cofactor is Mn(2+).

The protein resides in the cytoplasm. It carries out the reaction isopentenyl diphosphate = dimethylallyl diphosphate. Its pathway is isoprenoid biosynthesis; dimethylallyl diphosphate biosynthesis; dimethylallyl diphosphate from isopentenyl diphosphate: step 1/1. Its function is as follows. Catalyzes the 1,3-allylic rearrangement of the homoallylic substrate isopentenyl (IPP) to its highly electrophilic allylic isomer, dimethylallyl diphosphate (DMAPP). This chain is Isopentenyl-diphosphate Delta-isomerase, found in Halorhodospira halophila (strain DSM 244 / SL1) (Ectothiorhodospira halophila (strain DSM 244 / SL1)).